Consider the following 636-residue polypeptide: Chaperone protein DnaK (636 aa).

Thr198 is modified (phosphothreonine; by autocatalysis). The segment covering 602–613 (QPAGEEQAGAAA) has biased composition (low complexity). The disordered stretch occupies residues 602–636 (QPAGEEQAGAAAHEGEAKGEKVVDADFEEVKEDKK). Residues 614 to 625 (HEGEAKGEKVVD) show a composition bias toward basic and acidic residues. Residues 626 to 636 (ADFEEVKEDKK) are compositionally biased toward acidic residues.

It belongs to the heat shock protein 70 family.

Acts as a chaperone. The chain is Chaperone protein DnaK from Geotalea daltonii (strain DSM 22248 / JCM 15807 / FRC-32) (Geobacter daltonii).